Reading from the N-terminus, the 607-residue chain is UvrABC system protein C (607 aa).

Residues 12-91 form the GIY-YIG domain; it reads DSPGVYLYKD…IKRYRPRYNI (80 aa). Positions 200-235 constitute a UVR domain; sequence ENLIKKLKKEMAIASDNLEFERAAKLRDQILALEKI.

It belongs to the UvrC family. Interacts with UvrB in an incision complex.

It is found in the cytoplasm. Its function is as follows. The UvrABC repair system catalyzes the recognition and processing of DNA lesions. UvrC both incises the 5' and 3' sides of the lesion. The N-terminal half is responsible for the 3' incision and the C-terminal half is responsible for the 5' incision. The sequence is that of UvrABC system protein C from Carboxydothermus hydrogenoformans (strain ATCC BAA-161 / DSM 6008 / Z-2901).